The primary structure comprises 249 residues: Small ribosomal subunit protein uS4m (249 aa).

An S4 RNA-binding domain is found at 133-193 (RRLDIIIYRA…PEIVNLLRNQ (61 aa)).

It belongs to the universal ribosomal protein uS4 family.

It is found in the mitochondrion. The sequence is that of Small ribosomal subunit protein uS4m (RPS4) from Reclinomonas americana.